The chain runs to 138 residues: CLAVATA3/ESR (CLE)-related protein 2 (138 aa).

Residues 1–22 (MPNIFKILLIVLLAVVSFRLSA) form the signal peptide. Residues 23–90 (STGDKKTAND…VPSHVTNRSM (68 aa)) form a required for secretion from the host cytoplasm to the host apoplasm region. N-linked (GlcNAc...) asparagine glycans are attached at residues asparagine 37, asparagine 87, and asparagine 123. Disordered stretches follow at residues 66-97 (AIGRSNAQGGNAAGLVPSHVTNRSMAPPPPPV) and 116-138 (LAEKMPVNESKRLSPSGPDPHHH). The short motif at 127 to 138 (RLSPSGPDPHHH) is the CLE element.

It belongs to the CLV3/ESR signal peptide family. As to expression, highly expressed exclusively within the dorsal esophageal gland cell during syncytium formation in host plants (at protein level).

Its subcellular location is the secreted. It localises to the host cytoplasm. The protein localises to the host extracellular space. The protein resides in the extracellular space. It is found in the apoplast. Functionally, mimics host plant CLE extracellular signal peptides that regulate cell fate. May play a role in the differentiation or division of feeding cells (syncytia) induced in plant roots during infection. The protein is CLAVATA3/ESR (CLE)-related protein 2 (CLE2) of Heterodera glycines (Soybean cyst nematode worm).